Consider the following 224-residue polypeptide: Germin-like protein 8-4 (224 aa).

Residues 1 to 23 form the signal peptide; that stretch reads MASSSSLYLLAALLALASWQAIA. Cys33 and Cys48 are oxidised to a cystine. The Cupin type-1 domain occupies 70 to 213; sequence STMNKVGSNV…AFQVEKKVID (144 aa). A glycan (N-linked (GlcNAc...) asparagine) is linked at Asn78. Residues His111, His113, Glu118, and His158 each coordinate Mn(2+).

It belongs to the germin family. As to quaternary structure, oligomer (believed to be a pentamer but probably hexamer).

It localises to the secreted. The protein resides in the extracellular space. The protein localises to the apoplast. Plays a role in broad-spectrum disease resistance. Probably has no oxalate oxidase activity even if the active site is conserved. The sequence is that of Germin-like protein 8-4 (GER1) from Oryza sativa subsp. japonica (Rice).